The primary structure comprises 189 residues: Large ribosomal subunit protein bL17 (189 aa).

Positions 126-189 are disordered; the sequence is DRARRVKASQ…DADADEAPQN (64 aa). Positions 139 to 180 are enriched in low complexity; that stretch reads QDAPSEPQAAEEPAAEEAVAATEAVAAPADAEATDAEAGSAD.

This sequence belongs to the bacterial ribosomal protein bL17 family. In terms of assembly, part of the 50S ribosomal subunit. Contacts protein L32.

The polypeptide is Large ribosomal subunit protein bL17 (Mycobacterium marinum (strain ATCC BAA-535 / M)).